Reading from the N-terminus, the 199-residue chain is Imidazoleglycerol-phosphate dehydratase (199 aa).

The protein belongs to the imidazoleglycerol-phosphate dehydratase family.

Its subcellular location is the cytoplasm. It carries out the reaction D-erythro-1-(imidazol-4-yl)glycerol 3-phosphate = 3-(imidazol-4-yl)-2-oxopropyl phosphate + H2O. The protein operates within amino-acid biosynthesis; L-histidine biosynthesis; L-histidine from 5-phospho-alpha-D-ribose 1-diphosphate: step 6/9. In Methylibium petroleiphilum (strain ATCC BAA-1232 / LMG 22953 / PM1), this protein is Imidazoleglycerol-phosphate dehydratase.